A 401-amino-acid chain; its full sequence is Succinyl-diaminopimelate desuccinylase (401 aa).

H71 is a Zn(2+) binding site. The active site involves D73. D104 is a Zn(2+) binding site. The Proton acceptor role is filled by E138. Zn(2+) is bound by residues E139, E167, and H352.

This sequence belongs to the peptidase M20A family. DapE subfamily. As to quaternary structure, homodimer. Zn(2+) is required as a cofactor. It depends on Co(2+) as a cofactor.

It carries out the reaction N-succinyl-(2S,6S)-2,6-diaminopimelate + H2O = (2S,6S)-2,6-diaminopimelate + succinate. The protein operates within amino-acid biosynthesis; L-lysine biosynthesis via DAP pathway; LL-2,6-diaminopimelate from (S)-tetrahydrodipicolinate (succinylase route): step 3/3. Functionally, catalyzes the hydrolysis of N-succinyl-L,L-diaminopimelic acid (SDAP), forming succinate and LL-2,6-diaminopimelate (DAP), an intermediate involved in the bacterial biosynthesis of lysine and meso-diaminopimelic acid, an essential component of bacterial cell walls. This is Succinyl-diaminopimelate desuccinylase from Wolbachia sp. subsp. Brugia malayi (strain TRS).